We begin with the raw amino-acid sequence, 676 residues long: Polyunsaturated fatty acid lipoxygenase ALOX15B (676 aa).

The region spanning 2–124 (AEFRVRVSTG…TLVLQEGTAK (123 aa)) is the PLAT domain. G15, G17, D39, N40, G42, E44, D85, and A86 together coordinate Ca(2+). In terms of domain architecture, Lipoxygenase spans 125-676 (VSWADHHPVL…PPLIENSVSI (552 aa)). Fe cation-binding residues include H373, H378, H553, and I676.

It belongs to the lipoxygenase family. Fe cation is required as a cofactor. As to expression, expressed in hair, prostate, lung, ovary, lymph node, spinal cord and cornea.

Its subcellular location is the nucleus. It is found in the cytoplasm. The protein localises to the cytosol. It localises to the cell membrane. The protein resides in the cytoskeleton. Its subcellular location is the membrane. It is found in the cell junction. The protein localises to the adherens junction. It localises to the focal adhesion. It carries out the reaction (5Z,8Z,11Z,14Z)-eicosatetraenoate + O2 = (15S)-hydroperoxy-(5Z,8Z,11Z,13E)-eicosatetraenoate. The enzyme catalyses (9Z,12Z)-octadecadienoate + O2 = 13-hydroperoxy-(9Z,11E)-octadecadienoate. It catalyses the reaction (5S)-hydroxy-(6E,8Z,11Z,14Z)-eicosatetraenoate + O2 = (5S)-hydroxy-(15S)-hydroperoxy-(6E,8Z,11Z,13E)-eicosatetraenoate. The catalysed reaction is (5Z,8Z,11Z,14Z)-eicosatetraenoate + O2 = 5-hydroperoxy-(6E,8Z,11Z,14Z)-eicosatetraenoate. It carries out the reaction (5S,6R)-dihydroxy-(7E,9E,11Z,14Z)-eicosatetraenoate + O2 = (5S,6R)-dihydroxy-(15S)-hydroperoxy-(7E,9E,11Z,13E)-eicosatetraenoate. The enzyme catalyses (5S)-hydroperoxy-(6E,8Z,11Z,14Z)-eicosatetraenoate + O2 = (5S,15S)-dihydroperoxy-(6E,8Z,11Z,13E)-eicosatetraenoate. It catalyses the reaction 2-(5Z,8Z,11Z,14Z-eicosatetraenoyl)-glycerol + O2 = 2-[15(S)-hydroperoxy-(5Z,8Z,11Z,13E)-eicosatetraenoyl]-glycerol. The catalysed reaction is (8S)-hydroperoxy-(5Z,9E,11Z,14Z)-eicosatetraenoate + O2 = (8S,15S)-dihydroperoxy-(5Z,9E,11Z,13E)-eicosatetraenoate. It carries out the reaction N-(5Z,8Z,11Z,14Z)-eicosatetraenoyl-L-alanine + O2 = N-(15S)-hydroperoxy-(5Z,8Z,11Z,13E)-eicosatetraenoyl-alanine. The enzyme catalyses N-(5Z,8Z,11Z,14Z)-eicosatetraenoyl-gamma-aminobutanoate + O2 = N-(15S)-hydroperoxy-(5Z,8Z,11Z,13E)-eicosatetraenoyl-gamma-aminobutanoate. It catalyses the reaction N-(5Z,8Z,11Z,14Z)-eicosatetraenoyl-glycine + O2 = N-(15S)-hydroperoxy-(5Z,8Z,11Z,13E)-eicosatetraenoyl-glycine. The catalysed reaction is N-(5Z,8Z,11Z,14Z)-eicosatetraenoyl-taurine + O2 = N-(15S)-hydroperoxy-(5Z,8Z,11Z,13E)-eicosatetraenoyl-taurine. It carries out the reaction 2-(5Z,8Z,11Z,14Z-eicosatetraenoyl)-glycerol + O2 = 2-[12-hydroperoxy-(5Z,8Z,10E,14Z)-eicosatetraenoyl]-glycerol. The enzyme catalyses 1-octadecanoyl-2-(5Z,8Z,11Z,14Z-eicosatetraenoyl)-sn-glycero-3-phosphocholine + O2 = 1-octadecanoyl-2-(15-hydroperoxy-5Z,8Z,11Z,13E-eicosatetraenoyl)-sn-glycero-3-phosphocholine. It catalyses the reaction a 1-acyl-2-(5Z,8Z,11Z,14Z-eicosatetraenoyl)-sn-glycero-3-phospho-(1D-myo-inositol) + O2 = a 1-acyl-2-(15-hydroperoxy-5Z,8Z,11Z,13E-eicosatetraenoyl)-sn-glycero-3-phospho-(1D-myo-inositol). The catalysed reaction is a 1-acyl-2-(8Z,11Z,14Z-eicosatrienoyl)-sn-glycero-3-phospho-(1D-myo-inositol) + O2 = a 1-acyl-2-(15-hydroperoxy-8Z,11Z,13E-eicosatrienoyl)-sn-glycero-3-phospho-(1D-myo-inositol). It carries out the reaction 1-octadecanoyl-2-(5Z,8Z,11Z,14Z)-eicosatetraenoyl-sn-glycero-3-phosphoethanolamine + O2 = 1-octadecanoyl-2-(15-hydroperoxy-5Z,8Z,11Z,13E-eicosatetraenoyl)-sn-glycero-3-phosphoethanolamine. The enzyme catalyses 1-octadecanoyl-2-(5Z,8Z,11Z,14Z-eicosatetraenoyl)-sn-glycero-3-phospho-(1D-myo-inositol) + O2 = 1-octadecanoyl-2-(15-hydroperoxy-5Z,8Z,11Z,13E-eicosatetraenoyl)-sn-glycero-3-phospho-(1D-myo-inositol). It catalyses the reaction (8Z,11Z,14Z)-eicosatrienoate + O2 = 15-hydroperoxy-(8Z,11Z,13E)-eicosatrienoate. The catalysed reaction is (7S)-hydroperoxy-(4Z,8E,10Z,13Z,16Z,19Z)-docosahexaenoate + O2 = (7S,17S)-dihydroperoxy-(4Z,8E,10Z,13Z,15E,19Z)-docosahexaenoate. It carries out the reaction (5Z,8Z,11Z,14Z)-eicosatetraenoate + O2 = 15-hydroperoxy-(5Z,8Z,11Z,13E)-eicosatetraenoate. Its pathway is lipid metabolism; hydroperoxy eicosatetraenoic acid biosynthesis. Its function is as follows. Non-heme iron-containing dioxygenase that catalyzes the stereo-specific peroxidation of free and esterified polyunsaturated fatty acids (PUFAs) generating a spectrum of bioactive lipid mediators. It inserts peroxyl groups at C15 of arachidonate ((5Z,8Z,11Z,14Z)-eicosatetraenoate) producing (15S)-hydroperoxyeicosatetraenoate/(15S)-HPETE. Also peroxidizes linoleate ((9Z,12Z)-octadecadienoate) to 13-hydroperoxyoctadecadienoate/13-HPODE. Oxygenates arachidonyl derivatives such as 2-arachidonoylglycerol (2-AG) leading to the production and extracellular release of 15-hydroxyeicosatetraenoyl glycerol (15-HETE-G) that acts as a peroxisome proliferator-activated receptor alpha agonist. Has the ability to efficiently class-switch ALOX5 pro-inflammatory mediators into anti-inflammatory intermediates. Participates in the sequential oxidations of DHA ((4Z,7Z,10Z,13Z,16Z,19Z)-docosahexaenoate) to generate specialized pro-resolving mediators (SPMs) resolvin D5 ((7S,17S)-diHPDHA), which can actively down-regulate the immune response and have anti-aggregation properties with platelets. In addition to free PUFAs hydrolyzed from phospholipids, it directly oxidizes PUFAs esterified to membrane-bound phospholipids. Has no detectable 8S-lipoxygenase activity on arachidonate but reacts with (8S)-HPETE to produce (8S,15S)-diHPETE. May regulate progression through the cell cycle and cell proliferation. May also regulate cytokine secretion by macrophages and therefore play a role in the immune response. May also regulate macrophage differentiation into proatherogenic foam cells. Functionally, does not convert arachidonic acid to 15S-hydroperoxyeicosatetraenoic acid/(15S)-HPETE. In Homo sapiens (Human), this protein is Polyunsaturated fatty acid lipoxygenase ALOX15B.